The following is a 109-amino-acid chain: Large ribosomal subunit protein uL24 (109 aa).

The protein belongs to the universal ribosomal protein uL24 family. Part of the 50S ribosomal subunit.

In terms of biological role, one of two assembly initiator proteins, it binds directly to the 5'-end of the 23S rRNA, where it nucleates assembly of the 50S subunit. Its function is as follows. One of the proteins that surrounds the polypeptide exit tunnel on the outside of the subunit. The sequence is that of Large ribosomal subunit protein uL24 from Rickettsia canadensis (strain McKiel).